The primary structure comprises 447 residues: Gastrin/cholecystokinin type B receptor (447 aa).

At 1-57 the chain is on the extracellular side; the sequence is MELLKLNRSVQGTGPGPGASLCRPGAPLLNSSSVGNLSCEPPRIRGAGTRELELAIR. N-linked (GlcNAc...) asparagine glycans are attached at residues asparagine 7, asparagine 30, and asparagine 36. Residues 58 to 79 form a helical membrane-spanning segment; the sequence is ITLYAVIFLMSVGGNMLIIVVL. Topologically, residues 80 to 87 are cytoplasmic; it reads GLSRRLRT. A helical membrane pass occupies residues 88 to 109; the sequence is VTNAFLLSLAVSDLLLAVACMP. The Extracellular segment spans residues 110 to 131; it reads FTLLPNLMGTFIFGTVICKAVS. Residues cysteine 127 and cysteine 205 are joined by a disulfide bond. The helical transmembrane segment at 132–150 threads the bilayer; that stretch reads YLMGVSVSVSTLSLVAIAL. The Cytoplasmic segment spans residues 151 to 170; the sequence is ERYSAICRPLQARVWQTRSH. The helical transmembrane segment at 171-189 threads the bilayer; the sequence is AARVIVATWLLSGLLMVPY. Over 190-219 the chain is Extracellular; the sequence is PVYTVVQPVGPRVLQCVHRWPSARVRQTWS. The helical transmembrane segment at 220–242 threads the bilayer; it reads VLLLLLLFFIPGVVMAVAYGLIS. Residues 243 to 333 lie on the Cytoplasmic side of the membrane; that stretch reads RELYLGLRFD…KLLAKKRVVR (91 aa). Residues 258–285 form a disordered region; sequence DSQSRVRNQGGLPGAVHQNGRCRPETGA. Residues 334–355 form a helical membrane-spanning segment; the sequence is MLLVIVVLFFLCWLPVYSANTW. Residues 356–373 lie on the Extracellular side of the membrane; the sequence is RAFDGPGAHRALSGAPIS. The helical transmembrane segment at 374–394 threads the bilayer; it reads FIHLLSYASACVNPLVYCFMH. The Cytoplasmic portion of the chain corresponds to 395–447; sequence RRFRQACLETCARCCPRPPRARPRALPDEDPPTPSIASLSRLSYTTISTLGPG. Residue cysteine 408 is the site of S-palmitoyl cysteine attachment.

This sequence belongs to the G-protein coupled receptor 1 family. In terms of tissue distribution, isoform 1 is expressed in brain, pancreas, stomach, the colon cancer cell line LoVo and the T-lymphoblastoma Jurkat, but not in heart, placenta, liver, lung, skeletal muscle, kidney or the stomach cancer cell line AGS. Expressed at high levels in the small cell lung cancer cell line NCI-H510, at lower levels in NCI-H345, NCI-H69 and GLC-28 cell lines, not expressed in GLC-19 cell line. Within the stomach, expressed at high levels in the mucosa of the gastric fundus and at low levels in the antrum and duodenum. Isoform 2 is present in pancreatic cancer cells and colorectal cancer cells, but not in normal pancreas or colonic mucosa. Isoform 3 is expressed in brain, pancreas, stomach, the stomach cancer cell line AGS and the colon cancer cell line LoVo.

Its subcellular location is the cell membrane. Receptor for gastrin and cholecystokinin. The CCK-B receptors occur throughout the central nervous system where they modulate anxiety, analgesia, arousal, and neuroleptic activity. This receptor mediates its action by association with G proteins that activate a phosphatidylinositol-calcium second messenger system. In terms of biological role, isoform 2 is constitutively activated and may regulate cancer cell proliferation via a gastrin-independent mechanism. This chain is Gastrin/cholecystokinin type B receptor, found in Homo sapiens (Human).